A 480-amino-acid chain; its full sequence is Glutamate--tRNA ligase (480 aa).

Positions 21 to 31 match the 'HIGH' region motif; sequence PSPTGYLHVGG. Positions 110, 112, 137, and 139 each coordinate Zn(2+). Positions 248 to 252 match the 'KMSKS' region motif; it reads KLSKR. Lysine 251 serves as a coordination point for ATP.

Belongs to the class-I aminoacyl-tRNA synthetase family. Glutamate--tRNA ligase type 1 subfamily. Monomer. Zn(2+) serves as cofactor.

The protein resides in the cytoplasm. It carries out the reaction tRNA(Glu) + L-glutamate + ATP = L-glutamyl-tRNA(Glu) + AMP + diphosphate. In terms of biological role, catalyzes the attachment of glutamate to tRNA(Glu) in a two-step reaction: glutamate is first activated by ATP to form Glu-AMP and then transferred to the acceptor end of tRNA(Glu). This is Glutamate--tRNA ligase from Actinobacillus succinogenes (strain ATCC 55618 / DSM 22257 / CCUG 43843 / 130Z).